We begin with the raw amino-acid sequence, 201 residues long: Small ribosomal subunit protein uS5 (201 aa).

The segment at 1 to 28 (MARGEQQRGEGGQRRDRRDRNAPEERVD) is disordered. The S5 DRBM domain maps to 31–94 (IVEKLVHINR…EEAKKTMIRV (64 aa)). A disordered region spans residues 173–201 (QIAAKRGKKVGDILGRRADGASAPEAIEG). Positions 181–191 (KVGDILGRRAD) are enriched in basic and acidic residues.

The protein belongs to the universal ribosomal protein uS5 family. As to quaternary structure, part of the 30S ribosomal subunit. Contacts proteins S4 and S8.

Functionally, with S4 and S12 plays an important role in translational accuracy. In terms of biological role, located at the back of the 30S subunit body where it stabilizes the conformation of the head with respect to the body. In Caulobacter vibrioides (strain ATCC 19089 / CIP 103742 / CB 15) (Caulobacter crescentus), this protein is Small ribosomal subunit protein uS5.